A 309-amino-acid chain; its full sequence is Tagatose-6-phosphate kinase (309 aa).

It belongs to the carbohydrate kinase PfkB family. LacC subfamily.

The catalysed reaction is D-tagatofuranose 6-phosphate + ATP = D-tagatofuranose 1,6-bisphosphate + ADP + H(+). The protein operates within carbohydrate metabolism; D-tagatose 6-phosphate degradation; D-glyceraldehyde 3-phosphate and glycerone phosphate from D-tagatose 6-phosphate: step 1/2. The chain is Tagatose-6-phosphate kinase from Streptococcus pyogenes serotype M3 (strain SSI-1).